A 658-amino-acid polypeptide reads, in one-letter code: Biosynthetic arginine decarboxylase (658 aa).

K127 carries the post-translational modification N6-(pyridoxal phosphate)lysine. 307–317 contributes to the substrate binding site; sequence FDVGGGLGVDY.

Belongs to the Orn/Lys/Arg decarboxylase class-II family. SpeA subfamily. As to quaternary structure, homotetramer. The cofactor is pyridoxal 5'-phosphate. Requires Mg(2+) as cofactor. In terms of processing, processed post-translationally to a 70 kDa mature form. Post-translationally, the N-terminus is blocked.

It localises to the periplasm. The enzyme catalyses L-arginine + H(+) = agmatine + CO2. The protein operates within amine and polyamine biosynthesis; agmatine biosynthesis; agmatine from L-arginine: step 1/1. With respect to regulation, down-regulated by polyamine end products putrescine and spermidine. Catalyzes the biosynthesis of agmatine from arginine. The chain is Biosynthetic arginine decarboxylase (speA) from Escherichia coli (strain K12).